Here is a 372-residue protein sequence, read N- to C-terminus: Aminomethyltransferase (372 aa).

It belongs to the GcvT family. The glycine cleavage system is composed of four proteins: P, T, L and H.

The enzyme catalyses N(6)-[(R)-S(8)-aminomethyldihydrolipoyl]-L-lysyl-[protein] + (6S)-5,6,7,8-tetrahydrofolate = N(6)-[(R)-dihydrolipoyl]-L-lysyl-[protein] + (6R)-5,10-methylene-5,6,7,8-tetrahydrofolate + NH4(+). In terms of biological role, the glycine cleavage system catalyzes the degradation of glycine. The chain is Aminomethyltransferase from Rubrobacter xylanophilus (strain DSM 9941 / JCM 11954 / NBRC 16129 / PRD-1).